A 75-amino-acid polypeptide reads, in one-letter code: Penaeidin-3n (75 aa).

Residues 1-19 (MRLVVCLVFLASFALVCQG) form the signal peptide. At Gln20 the chain carries Pyrrolidone carboxylic acid. 2 disulfides stabilise this stretch: Cys44-Cys59 and Cys48-Cys66. At Ser74 the chain carries Serine amide.

This sequence belongs to the penaeidin family.

It localises to the cytoplasmic granule. In terms of biological role, antibacterial and antifungal activity. Presents chitin-binding activity. This Penaeus setiferus (Atlantic white shrimp) protein is Penaeidin-3n.